The sequence spans 886 residues: Alanine--tRNA ligase (886 aa).

Zn(2+)-binding residues include H570, H574, C673, and H677.

It belongs to the class-II aminoacyl-tRNA synthetase family. It depends on Zn(2+) as a cofactor.

Its subcellular location is the cytoplasm. It carries out the reaction tRNA(Ala) + L-alanine + ATP = L-alanyl-tRNA(Ala) + AMP + diphosphate. In terms of biological role, catalyzes the attachment of alanine to tRNA(Ala) in a two-step reaction: alanine is first activated by ATP to form Ala-AMP and then transferred to the acceptor end of tRNA(Ala). Also edits incorrectly charged Ser-tRNA(Ala) and Gly-tRNA(Ala) via its editing domain. The chain is Alanine--tRNA ligase from Chlorobium chlorochromatii (strain CaD3).